The chain runs to 233 residues: Biosynthetic peptidoglycan transglycosylase (233 aa).

A helical membrane pass occupies residues 8-28 (LIALPVGIFIFFNAYVYGNII).

Belongs to the glycosyltransferase 51 family.

Its subcellular location is the cell inner membrane. It carries out the reaction [GlcNAc-(1-&gt;4)-Mur2Ac(oyl-L-Ala-gamma-D-Glu-L-Lys-D-Ala-D-Ala)](n)-di-trans,octa-cis-undecaprenyl diphosphate + beta-D-GlcNAc-(1-&gt;4)-Mur2Ac(oyl-L-Ala-gamma-D-Glu-L-Lys-D-Ala-D-Ala)-di-trans,octa-cis-undecaprenyl diphosphate = [GlcNAc-(1-&gt;4)-Mur2Ac(oyl-L-Ala-gamma-D-Glu-L-Lys-D-Ala-D-Ala)](n+1)-di-trans,octa-cis-undecaprenyl diphosphate + di-trans,octa-cis-undecaprenyl diphosphate + H(+). Its pathway is cell wall biogenesis; peptidoglycan biosynthesis. Peptidoglycan polymerase that catalyzes glycan chain elongation from lipid-linked precursors. The protein is Biosynthetic peptidoglycan transglycosylase of Neisseria meningitidis serogroup A / serotype 4A (strain DSM 15465 / Z2491).